We begin with the raw amino-acid sequence, 217 residues long: Small ribosomal subunit protein uS3 (217 aa).

The KH type-2 domain occupies 38 to 106; sequence IRKFVQKELA…QVHINIIEIK (69 aa).

It belongs to the universal ribosomal protein uS3 family. In terms of assembly, part of the 30S ribosomal subunit. Forms a tight complex with proteins S10 and S14.

Its function is as follows. Binds the lower part of the 30S subunit head. Binds mRNA in the 70S ribosome, positioning it for translation. The polypeptide is Small ribosomal subunit protein uS3 (Streptococcus gordonii (strain Challis / ATCC 35105 / BCRC 15272 / CH1 / DL1 / V288)).